Here is a 250-residue protein sequence, read N- to C-terminus: Probable transcriptional regulatory protein Paes_0496 (250 aa).

The protein belongs to the TACO1 family.

The protein resides in the cytoplasm. The sequence is that of Probable transcriptional regulatory protein Paes_0496 from Prosthecochloris aestuarii (strain DSM 271 / SK 413).